Consider the following 173-residue polypeptide: Adenine phosphoribosyltransferase (173 aa).

It belongs to the purine/pyrimidine phosphoribosyltransferase family. In terms of assembly, homodimer.

The protein resides in the cytoplasm. The catalysed reaction is AMP + diphosphate = 5-phospho-alpha-D-ribose 1-diphosphate + adenine. It participates in purine metabolism; AMP biosynthesis via salvage pathway; AMP from adenine: step 1/1. Functionally, catalyzes a salvage reaction resulting in the formation of AMP, that is energically less costly than de novo synthesis. This chain is Adenine phosphoribosyltransferase, found in Thermotoga maritima (strain ATCC 43589 / DSM 3109 / JCM 10099 / NBRC 100826 / MSB8).